A 475-amino-acid chain; its full sequence is Glutamyl-tRNA(Gln) amidotransferase subunit A (475 aa).

Residues Lys69 and Ser144 each act as charge relay system in the active site. Ser168 serves as the catalytic Acyl-ester intermediate.

The protein belongs to the amidase family. GatA subfamily. In terms of assembly, heterotrimer of A, B and C subunits.

The catalysed reaction is L-glutamyl-tRNA(Gln) + L-glutamine + ATP + H2O = L-glutaminyl-tRNA(Gln) + L-glutamate + ADP + phosphate + H(+). Functionally, allows the formation of correctly charged Gln-tRNA(Gln) through the transamidation of misacylated Glu-tRNA(Gln) in organisms which lack glutaminyl-tRNA synthetase. The reaction takes place in the presence of glutamine and ATP through an activated gamma-phospho-Glu-tRNA(Gln). In Methanococcoides burtonii (strain DSM 6242 / NBRC 107633 / OCM 468 / ACE-M), this protein is Glutamyl-tRNA(Gln) amidotransferase subunit A.